Reading from the N-terminus, the 784-residue chain is Toll-like receptor 2 (784 aa).

Residues 1–20 (MPHTLWMVWVLGVIISLSKE) form the signal peptide. Residues 21-587 (ESSNQASLSC…VRLSVSECHR (567 aa)) lie on the Extracellular side of the membrane. Residues Cys30 and Cys36 are joined by a disulfide bond. LRR repeat units lie at residues 54-77 (VKSL…RCVN), 78-101 (LQAL…SLGS), 102-125 (LEHL…PLSS), 126-150 (LTFL…HLTK), 151-175 (LQIL…GLTF), 176-199 (LEEL…SIQN), 200-223 (VSHL…VTSS), 224-250 (VECL…TNSL), 251-278 (IKKF…QISG), 279-308 (LLEL…DPGK), 309-337 (VETL…LTER), 338-361 (VKRI…HLKS), 362-388 (LEYL…AWPS), 389-414 (LQTL…TLKN), 415-437 (LTNV…WPEK), 438-457 (MKYL…CIPK), 458-478 (TLEI…NLPQ), 479-500 (LKEL…LLPM), and 501-524 (LLVL…SFHT). Asn114 carries N-linked (GlcNAc...) asparagine glycosylation. Asn199 is a glycosylation site (N-linked (GlcNAc...) asparagine). The cysteines at positions 353 and 382 are disulfide-linked. N-linked (GlcNAc...) asparagine glycosylation is present at Asn414. Cys432 and Cys454 form a disulfide bridge. Asn442 is a glycosylation site (N-linked (GlcNAc...) asparagine). The region spanning 525-579 (LKTLEAGGNNFICSCEFLSFTQEQQALAKVLIDWPANYLCDSPSHVRGQQVQDVR) is the LRRCT domain. The chain crosses the membrane as a helical span at residues 588-608 (TALVSGMCCALFLLILLTGVL). Topologically, residues 609-784 (CHRFHGLWYM…WVNLRAAIKS (176 aa)) are cytoplasmic. One can recognise a TIR domain in the interval 639-782 (ICYDAFVSYS…GFWVNLRAAI (144 aa)). Lys754 participates in a covalent cross-link: Glycyl lysine isopeptide (Lys-Gly) (interchain with G-Cter in ubiquitin). Positions 761-778 (YLEWPMDEAQREGFWVNL) match the ATG16L1-binding motif motif.

This sequence belongs to the Toll-like receptor family. In terms of assembly, interacts with LY96, TLR1 and TLR6 (via extracellular domain). TLR2 seems to exist in heterodimers with either TLR1 or TLR6 before stimulation by the ligand. The heterodimers form bigger oligomers in response to their corresponding ligands as well as further heterotypic associations with other receptors such as CD14 and/or CD36. Binds MYD88 (via TIR domain). Interacts with TICAM1. Interacts with CNPY3. Interacts with ATG16L1. Interacts with PPP1R11. Interacts with TICAM2. Interacts with TIRAP. Post-translationally, ubiquitinated at Lys-754 by PPP1R11, leading to its degradation. Deubiquitinated by USP2. Glycosylation of Asn-442 is critical for secretion of the N-terminal ectodomain of TLR2.

It localises to the membrane. Its subcellular location is the cytoplasmic vesicle. The protein resides in the phagosome membrane. It is found in the membrane raft. Its function is as follows. Cooperates with LY96 to mediate the innate immune response to bacterial lipoproteins and other microbial cell wall components. Cooperates with TLR1 or TLR6 to mediate the innate immune response to bacterial lipoproteins or lipopeptides. Acts via MYD88 and TRAF6, leading to NF-kappa-B activation, cytokine secretion and the inflammatory response. May also promote apoptosis in response to lipoproteins. Forms activation clusters composed of several receptors depending on the ligand, these clusters trigger signaling from the cell surface and subsequently are targeted to the Golgi in a lipid-raft dependent pathway. Forms the cluster TLR2:TLR6:CD14:CD36 in response to diacylated lipopeptides and TLR2:TLR1:CD14 in response to triacylated lipopeptides. The polypeptide is Toll-like receptor 2 (TLR2) (Pan troglodytes (Chimpanzee)).